Reading from the N-terminus, the 148-residue chain is Proline-rich protein 13 (148 aa).

Positions 1–148 are disordered; the sequence is MWNPNAGQPG…SSSSSSSDSD (148 aa). Pro residues-rich tracts occupy residues 27–67 and 75–93; these read AHPP…PQPG and GPYPPPYPPPAPGIPPVNP. Over residues 109–135 the composition is skewed to basic residues; it reads MQKKMKKAHKKMHKHQKHHKYHKHGKH. Over residues 136–148 the composition is skewed to low complexity; it reads SSSSSSSSSSDSD.

It localises to the nucleus. Functionally, negatively regulates TSP1 expression at the level of transcription. This down-regulation was shown to reduce taxane-induced apoptosis. The sequence is that of Proline-rich protein 13 (PRR13) from Homo sapiens (Human).